Here is a 1146-residue protein sequence, read N- to C-terminus: MEEEQLRYSRRLRHTLRRRYEDDGISDDEIEGKRTFDLEEKLRSSKYNSNFITYMEGKDFNMKFIQEGGLRDPIIFTKSEGLGIKMPDPNFSVNDVKMFVGSRRVVDVMDVGTQKGIEMTMAQWAKYYETPEEEREKLYNVISLEFSHTKLENLVQRPTTVDQIDWVDNIWPRHLKDRQTESTNVIQEMQYPKVQKYCLMSVRGCYTDFHVDFGGTSVWYHILRGGKVFWLIPPTDQNLELYENWLLSGKQGDVFLGDRVTECQRIELKQGYTFVIPSGWIHAVYTPQDTLVFGGNFLHSFNIPMQLRIYSIEDRTRVPTKFRYPFYYEMCWYVLERYVYCMMRRSHLTKEFQRESLSIDLELNGRQRPDTPSSSSSSSSSGLSSSSDNDDSSDQDWEEEEGLRKRERDRCRVERELQRKRNRDRQQRDQERDRHGRTERIIIHTLPASLRPLTPPPSLPLPTPDSPPSTSPFLTWFEVEGLRCLVLKLESLPPLKKCLPDGIHDPEALIFDIKRLLEDHAHDPPELALTGVPIIQWPKRSQYKVHLRPKIQFTKPHTMRPASRHSTAPPRTSGTPSGTTASSGARRRRVRCRKCQACVQRECGTCHYCKDMKKFGGPGRMKQSCVLRQCLAPRLPHSVTCALCGEVDQTNDTQDFERKLMECSVCNEIVHPGCLEMDGEGLLSDELPNYWECPKCYEGQKHTVEANHDRILLHSKRKAADNYESSHYYPAKVLRPPLGQSPPSPPLLLLPPSPSSAPPTPPSAQTQVPLASREERAKRRQLAREKENHPTGCDQSEGDRLRLRGPYLTVTLQRPPKELSSTSIVPKLQAITPNPRQPIRAAPLHQDEEREEEEEEEEEEEETENVMLGQRKDSTSMQKDVWLSVFHYLTHEELCICMRVCKAWYKWGCDKRLWSRIDVSRCKSLVPQALSGIIKRQPIYLDLSWTNVSKKQLIWLINRLPGLKDLILAGCTWSAVSALASCSCPLLRTLDLRWTVGIKDTQIRDLLTPASDKSGHDSRSKLRLLTDLRLSGLDISDVTLRLIIRHCPLLSKLDLSHCPLLSDQSVNLLTAVGSSTRGTLTHIHLAGCKGVTDESLLYLRRATNLSLIDLHGCKQVTRGACEEFISDLSVSTLYCLSDDKLIQRIS.

In terms of domain architecture, JmjC spans 146–314 (FSHTKLENLV…MQLRIYSIED (169 aa)). T207 serves as a coordination point for substrate. H210 and D212 together coordinate Fe cation. Substrate is bound at residue K227. Position 282 (H282) interacts with Fe cation. Disordered regions lie at residues 363-467 (LNGR…PDSP) and 554-585 (TKPHTMRPASRHSTAPPRTSGTPSGTTASSGA). Over residues 373–387 (SSSSSSSSSGLSSSS) the composition is skewed to low complexity. The span at 388-401 (DNDDSSDQDWEEEE) shows a compositional bias: acidic residues. Positions 402–442 (GLRKRERDRCRVERELQRKRNRDRQQRDQERDRHGRTERII) are enriched in basic and acidic residues. Pro residues predominate over residues 453 to 467 (LTPPPSLPLPTPDSP). The span at 566–584 (STAPPRTSGTPSGTTASSG) shows a compositional bias: low complexity. Residues 585–631 (ARRRRVRCRKCQACVQRECGTCHYCKDMKKFGGPGRMKQSCVLRQCL) form a CXXC-type zinc finger. Residues C592, C595, C598, C603, C606, C609, C625, and C630 each contribute to the Zn(2+) site. The segment at 638–699 (SVTCALCGEV…YWECPKCYEG (62 aa)) adopts a PHD-type zinc-finger fold. 2 disordered regions span residues 733–800 (VLRP…EGDR) and 832–867 (TPNPRQPIRAAPLHQDEEREEEEEEEEEEEETENVM). Positions 739 to 762 (GQSPPSPPLLLLPPSPSSAPPTPP) are enriched in pro residues. Residues 772–789 (SREERAKRRQLAREKENH) show a composition bias toward basic and acidic residues. Acidic residues predominate over residues 849-864 (EREEEEEEEEEEEETE). In terms of domain architecture, F-box spans 874–919 (STSMQKDVWLSVFHYLTHEELCICMRVCKAWYKWGCDKRLWSRIDV). LRR repeat units lie at residues 945-966 (WTNVSKKQLIWLINRLPGLKDL), 968-994 (LAGCTWSAVSALASCSCPLLRTLDLRW), 1032-1057 (GLDISDVTLRLIIRHCPLLSKLDLSH), 1058-1087 (CPLLSDQSVNLLTAVGSSTRGTLTHIHLAG), 1088-1112 (CKGVTDESLLYLRRATNLSLIDLHG), and 1113-1138 (CKQVTRGACEEFISDLSVSTLYCLSD).

Belongs to the JHDM1 histone demethylase family. It depends on Fe(2+) as a cofactor.

It is found in the nucleus. The protein resides in the nucleoplasm. It carries out the reaction N(6),N(6)-dimethyl-L-lysyl(36)-[histone H3] + 2 2-oxoglutarate + 2 O2 = L-lysyl(36)-[histone H3] + 2 formaldehyde + 2 succinate + 2 CO2. Functionally, histone demethylase that specifically demethylates 'Lys-36' of histone H3, thereby playing a central role in histone code. Preferentially demethylates dimethylated H3 'Lys-36' residue while it has weak or no activity for mono- and tri-methylated H3 'Lys-36'. May also recognize and bind to some phosphorylated proteins and promote their ubiquitination and degradation. Required to maintain the heterochromatic state. Associates with centromeres and represses transcription of small non-coding RNAs that are encoded by the clusters of satellite repeats at the centromere. Required to sustain centromeric integrity and genomic stability, particularly during mitosis. May play a role in the regulation of circadian gene expression. In Xenopus tropicalis (Western clawed frog), this protein is Lysine-specific demethylase 2A (kdm2a).